We begin with the raw amino-acid sequence, 352 residues long: MDYQVSSPTYDIDYYTSGPCQKINVKQIAARLLPPLYSLVFIFGFVGNMLVILILINCKRLKSMTDIYLLNLAISDLFFLLTVPFWAHYAAAQWDFGNTMCQLLTGLYFIGFFSGIFFIILLTIDRYLAIVHAVFALKARTVTFGVVTSVITWVVAVFASLPGIIFTRSQKEGLHYTCSSHFPYSQYQFWKNFQTLKIVILGLVLPLLVMVICYSGILKTLLRCRNEKKRHRAVRLIFTIMIVYFLFWAPYNIVLLLNTFQEFFGLNNCSSSNRLDQAMQVTETLGMTHCCINPIIYAFVGEKFRNYLLVFFQKHIAKHFCKCCSIFQQEAPERASSVYTRSTGEQEISVGL.

The Extracellular segment spans residues 1–30; the sequence is MDYQVSSPTYDIDYYTSGPCQKINVKQIAA. A Sulfotyrosine modification is found at Tyr-3. 2 O-linked (GalNAc...) serine glycosylation sites follow: Ser-6 and Ser-7. Tyr-10, Tyr-14, and Tyr-15 each carry sulfotyrosine. 2 disulfide bridges follow: Cys-20-Cys-269 and Cys-101-Cys-178. The chain crosses the membrane as a helical span at residues 31–58; sequence RLLPPLYSLVFIFGFVGNMLVILILINC. The Cytoplasmic segment spans residues 59-68; sequence KRLKSMTDIY. Residues 69-89 form a helical membrane-spanning segment; the sequence is LLNLAISDLFFLLTVPFWAHY. The Extracellular segment spans residues 90–102; that stretch reads AAAQWDFGNTMCQ. Residues 103-124 form a helical membrane-spanning segment; sequence LLTGLYFIGFFSGIFFIILLTI. The Cytoplasmic segment spans residues 125–141; sequence DRYLAIVHAVFALKART. Residues 142–166 traverse the membrane as a helical segment; sequence VTFGVVTSVITWVVAVFASLPGIIF. At 167–198 the chain is on the extracellular side; that stretch reads TRSQKEGLHYTCSSHFPYSQYQFWKNFQTLKI. A helical membrane pass occupies residues 199–218; the sequence is VILGLVLPLLVMVICYSGIL. Topologically, residues 219–235 are cytoplasmic; sequence KTLLRCRNEKKRHRAVR. A helical transmembrane segment spans residues 236–260; it reads LIFTIMIVYFLFWAPYNIVLLLNTF. Residues 261-277 are Extracellular-facing; that stretch reads QEFFGLNNCSSSNRLDQ. The chain crosses the membrane as a helical span at residues 278 to 301; the sequence is AMQVTETLGMTHCCINPIIYAFVG. Residues 302–352 are Cytoplasmic-facing; it reads EKFRNYLLVFFQKHIAKHFCKCCSIFQQEAPERASSVYTRSTGEQEISVGL. 3 S-palmitoyl cysteine lipidation sites follow: Cys-321, Cys-323, and Cys-324. Phosphoserine; by BARK1 is present on residues Ser-336, Ser-337, Ser-342, and Ser-349.

This sequence belongs to the G-protein coupled receptor 1 family. In terms of assembly, interacts with PRAF2. Efficient ligand binding to CCL3/MIP-1alpha and CCL4/MIP-1beta requires sulfation, O-glycosylation and sialic acid modifications. Glycosylation on Ser-6 is required for efficient binding of CCL4. Interacts with GRK2. Interacts with ARRB1 and ARRB2. Interacts with CNIH4. Interacts with S100A4; this interaction stimulates T-lymphocyte chemotaxis. In terms of processing, sulfated on at least 2 of the N-terminal tyrosines. Sulfation is required for efficient binding of the chemokines, CCL3 and CCL4. Post-translationally, palmitoylation in the C-terminal is important for cell surface expression. Phosphorylation on serine residues in the C-terminal is stimulated by binding CC chemokines especially by APO-RANTES. In terms of processing, O-glycosylated, but not N-glycosylated. Ser-6 appears to be the major site even if Ser-7 may be also O-glycosylated. Also sialylated glycans present which contribute to chemokine binding. Thr-16 and Ser-17 may also be glycosylated and, if so, with small moieties such as a T-antigen.

The protein resides in the cell membrane. Functionally, receptor for a number of inflammatory CC-chemokines including CCL3/MIP-1-alpha, CCL4/MIP-1-beta and RANTES and subsequently transduces a signal by increasing the intracellular calcium ion level. May play a role in the control of granulocytic lineage proliferation or differentiation. Participates in T-lymphocyte migration to the infection site by acting as a chemotactic receptor. This is C-C chemokine receptor type 5 (CCR5) from Hylobates moloch (Silvery gibbon).